A 218-amino-acid polypeptide reads, in one-letter code: Ribose-5-phosphate isomerase A (218 aa).

Residues 28–31, 81–84, and 94–97 each bind substrate; these read TGST, DSAD, and KGKG. The active-site Proton acceptor is glutamate 103. Lysine 121 lines the substrate pocket.

This sequence belongs to the ribose 5-phosphate isomerase family. Homodimer.

The enzyme catalyses aldehydo-D-ribose 5-phosphate = D-ribulose 5-phosphate. It functions in the pathway carbohydrate degradation; pentose phosphate pathway; D-ribose 5-phosphate from D-ribulose 5-phosphate (non-oxidative stage): step 1/1. Catalyzes the reversible conversion of ribose-5-phosphate to ribulose 5-phosphate. The protein is Ribose-5-phosphate isomerase A of Blochmanniella pennsylvanica (strain BPEN).